A 393-amino-acid chain; its full sequence is Nuclear hormone receptor family member nhr-90 (393 aa).

The nuclear receptor DNA-binding region spans L6–H79. An NR C4-type zinc finger spans residues C9–C30. Residues C47–C62 form an NR C4-type; degenerate zinc finger. Residues D121–T388 form the NR LBD domain.

The protein belongs to the nuclear hormone receptor family.

It localises to the nucleus. Orphan nuclear receptor. This chain is Nuclear hormone receptor family member nhr-90 (nhr-90), found in Caenorhabditis elegans.